We begin with the raw amino-acid sequence, 78 residues long: Large ribosomal subunit protein bL28 (78 aa).

The tract at residues 1-21 (MSRVCQVTGKRPVSGNNRSHA) is disordered.

Belongs to the bacterial ribosomal protein bL28 family.

The chain is Large ribosomal subunit protein bL28 from Yersinia enterocolitica serotype O:8 / biotype 1B (strain NCTC 13174 / 8081).